Consider the following 186-residue polypeptide: Superoxide dismutase [Cu-Zn] (186 aa).

The N-terminal stretch at 1-20 (MKKTVLALMFSCGMVASAFA) is a signal peptide. Cu cation is bound by residues H79, H81, and H104. C86 and C182 form a disulfide bridge. Positions 104, 113, 122, and 125 each coordinate Zn(2+). Residue H160 participates in Cu cation binding.

The protein belongs to the Cu-Zn superoxide dismutase family. As to quaternary structure, homodimer. Cu cation serves as cofactor. Requires Zn(2+) as cofactor.

Its subcellular location is the periplasm. It carries out the reaction 2 superoxide + 2 H(+) = H2O2 + O2. Destroys radicals which are normally produced within the cells and which are toxic to biological systems. The protein is Superoxide dismutase [Cu-Zn] (sodC) of Pasteurella multocida (strain Pm70).